The primary structure comprises 90 residues: MSGTSQKHRNFVAEPMGNKSVTELAGIGETLGGRLKDAGFDMAYTVLGQYLVLKKDEELFKDWMKEVCHASSKQASDCYNCLNDWCEEFL.

Belongs to the BAF family. As to quaternary structure, may interact with MAD1.

The protein resides in the nucleus. It is found in the cytoplasm. Its subcellular location is the chromosome. Functionally, plays fundamental roles in nuclear assembly, chromatin organization, gene expression and gonad development. May potently compress chromatin structure and be involved in membrane recruitment and chromatin decondensation during nuclear assembly. Functions are required in both M phase and interphase of the cell cycle. The sequence is that of Barrier-to-autointegration factor (baf) from Drosophila melanogaster (Fruit fly).